The chain runs to 155 residues: Cytochrome c-type biogenesis protein CcmE (155 aa).

At 1 to 8 (MNPVRKKR) the chain is on the cytoplasmic side. The chain crosses the membrane as a helical; Signal-anchor for type II membrane protein span at residues 9 to 29 (LFIVLAILAGVGIAVALALSA). Over 30–155 (LQQNINLFYT…YEGGKQEYAK (126 aa)) the chain is Periplasmic. 2 residues coordinate heme: histidine 124 and tyrosine 128.

This sequence belongs to the CcmE/CycJ family.

The protein localises to the cell inner membrane. Functionally, heme chaperone required for the biogenesis of c-type cytochromes. Transiently binds heme delivered by CcmC and transfers the heme to apo-cytochromes in a process facilitated by CcmF and CcmH. The polypeptide is Cytochrome c-type biogenesis protein CcmE (Stutzerimonas stutzeri (strain A1501) (Pseudomonas stutzeri)).